The primary structure comprises 113 residues: Protein translation factor SUI1 homolog 1 (113 aa).

Positions 1 to 24 (MSELDSQVPTAFDPFADANAEDSG) are disordered. Residue serine 2 is modified to N-acetylserine.

Belongs to the SUI1 family.

Its function is as follows. Probably involved in translation. In Arabidopsis thaliana (Mouse-ear cress), this protein is Protein translation factor SUI1 homolog 1.